Here is a 116-residue protein sequence, read N- to C-terminus: MHEMSIALSIVDAVDAQARVEGAGRISRVELVIGRLAGIEPESLRFCFPAAATGTLAEGAELDIEEIAAVAVCGACGFRFSVTFPVAECPECRSLRISVVSGEEFVIRSITIEEGD.

His-2 serves as a coordination point for Ni(2+). Cys-73, Cys-76, Cys-89, and Cys-92 together coordinate Zn(2+).

It belongs to the HypA/HybF family.

Involved in the maturation of [NiFe] hydrogenases. Required for nickel insertion into the metal center of the hydrogenase. The sequence is that of Hydrogenase maturation factor HypA from Chlorobium limicola (strain DSM 245 / NBRC 103803 / 6330).